The primary structure comprises 345 residues: Protein RecA (345 aa).

66 to 73 provides a ligand contact to ATP; that stretch reads GPESSGKT.

This sequence belongs to the RecA family.

It is found in the cytoplasm. Its function is as follows. Can catalyze the hydrolysis of ATP in the presence of single-stranded DNA, the ATP-dependent uptake of single-stranded DNA by duplex DNA, and the ATP-dependent hybridization of homologous single-stranded DNAs. It interacts with LexA causing its activation and leading to its autocatalytic cleavage. This Helicobacter hepaticus (strain ATCC 51449 / 3B1) protein is Protein RecA.